Reading from the N-terminus, the 243-residue chain is uncharacterized protein (243 aa).

Basic and acidic residues-rich tracts occupy residues 1-11 (MSDEGYRELVE) and 167-178 (RNRDPPRPSYLR). 2 disordered regions span residues 1–26 (MSDE…SPDR) and 146–243 (ELYQ…CWPF). The segment covering 185–200 (STTTARRPRAMTSTPE) has biased composition (low complexity).

This is an uncharacterized protein from Canis lupus familiaris (Dog).